Consider the following 1149-residue polypeptide: cGMP-specific 3',5'-cyclic phosphodiesterase (1149 aa).

Composition is skewed to low complexity over residues 1-19 (MHGT…DVSS) and 31-47 (ATSS…ASSS). A disordered region spans residues 1–175 (MHGTVSRSSS…STTASQQDVD (175 aa)). Residues 48 to 59 (KPLTNGANKTAI) show a composition bias toward polar residues. Over residues 60 to 85 (STAAGVTPGAAPGPGCAAIPASGSSG) the composition is skewed to low complexity. Residues 96–108 (QSNNNRPAGSNRS) are compositionally biased toward polar residues. Positions 132-158 (SSSSPSQSPSQSQSQSQASIQTQTSQQ) are enriched in low complexity. 2 GAF domains span residues 278–430 (DIDV…GIGI) and 462–643 (NLEC…GLGI). The 324-residue stretch at 673–996 (SQDQTEKLTQ…RNWQDLAEKV (324 aa)) folds into the PDEase domain. Histidine 749 acts as the Proton donor in catalysis. Residues histidine 753, histidine 789, aspartate 790, and aspartate 900 each contribute to the a divalent metal cation site. 2 disordered regions span residues 1037–1066 (QQSQ…TGAL) and 1096–1149 (SHVS…CALL). 2 stretches are compositionally biased toward basic and acidic residues: residues 1042-1053 (GSEDSHTPEHQR) and 1096-1106 (SHVSEDMDDKS). A compositionally biased stretch (low complexity) spans 1115–1135 (ASGSMGRMSASSSTSSAGGQM). Positions 1139–1149 (SKKRSKLCALL) are enriched in basic residues. Cysteine methyl ester is present on cysteine 1146. Cysteine 1146 carries S-farnesyl cysteine lipidation. Positions 1147-1149 (ALL) are cleaved as a propeptide — removed in mature form.

The protein belongs to the cyclic nucleotide phosphodiesterase family. As to quaternary structure, interacts with PrBP. It depends on a divalent metal cation as a cofactor.

Its subcellular location is the cell membrane. It carries out the reaction 3',5'-cyclic GMP + H2O = GMP + H(+). Has a role regulating cGMP transport in Malpighian tubule principal cells. In Drosophila yakuba (Fruit fly), this protein is cGMP-specific 3',5'-cyclic phosphodiesterase.